The following is a 356-amino-acid chain: 3-isopropylmalate dehydrogenase (356 aa).

The substrate site is built by arginine 90, arginine 100, arginine 128, and aspartate 222. 3 residues coordinate Mg(2+): aspartate 222, aspartate 246, and aspartate 250. An NAD(+)-binding site is contributed by 280-292 (GSAPDIAGKGVAN).

It belongs to the isocitrate and isopropylmalate dehydrogenases family. LeuB type 1 subfamily. As to quaternary structure, homodimer. Mg(2+) serves as cofactor. The cofactor is Mn(2+).

It localises to the cytoplasm. It catalyses the reaction (2R,3S)-3-isopropylmalate + NAD(+) = 4-methyl-2-oxopentanoate + CO2 + NADH. It participates in amino-acid biosynthesis; L-leucine biosynthesis; L-leucine from 3-methyl-2-oxobutanoate: step 3/4. Functionally, catalyzes the oxidation of 3-carboxy-2-hydroxy-4-methylpentanoate (3-isopropylmalate) to 3-carboxy-4-methyl-2-oxopentanoate. The product decarboxylates to 4-methyl-2 oxopentanoate. The sequence is that of 3-isopropylmalate dehydrogenase from Albidiferax ferrireducens (strain ATCC BAA-621 / DSM 15236 / T118) (Rhodoferax ferrireducens).